A 444-amino-acid chain; its full sequence is Phosphoglucosamine mutase (444 aa).

The active-site Phosphoserine intermediate is the S102. S102, D241, D243, and D245 together coordinate Mg(2+). At S102 the chain carries Phosphoserine.

Belongs to the phosphohexose mutase family. Mg(2+) serves as cofactor. In terms of processing, activated by phosphorylation.

It carries out the reaction alpha-D-glucosamine 1-phosphate = D-glucosamine 6-phosphate. Catalyzes the conversion of glucosamine-6-phosphate to glucosamine-1-phosphate. The sequence is that of Phosphoglucosamine mutase from Acidovorax ebreus (strain TPSY) (Diaphorobacter sp. (strain TPSY)).